Consider the following 577-residue polypeptide: Monooxygenase PC-14 (577 aa).

This sequence belongs to the FMO family. FAD serves as cofactor.

It participates in secondary metabolite biosynthesis. Its function is as follows. Monooxygenase; part of the gene cluster that mediates the biosynthesis of the indole diterpenes penitrems. The geranylgeranyl diphosphate (GGPP) synthase penG catalyzes the first step in penitrem biosynthesis via conversion of farnesyl pyrophosphate and isopentyl pyrophosphate into geranylgeranyl pyrophosphate (GGPP). Condensation of indole-3-glycerol phosphate with GGPP by the prenyl transferase penC then forms 3-geranylgeranylindole (3-GGI). Epoxidation by the FAD-dependent monooxygenase penM leads to a epoxidized-GGI that is substrate of the terpene cyclase penB for cyclization to yield paspaline. Paspaline is subsequently converted to 13-desoxypaxilline by the cytochrome P450 monooxygenase penP, the latter being then converted to paxilline by the cytochrome P450 monooxygenase penQ. Paxilline is converted to beta-paxitriol via C-10 ketoreduction by the short-chain dehydrogenase PC-15 which can be monoprenylated at the C-20 by the indole diterpene prenyltransferase penD. A two-step elimination (acetylation and elimination) process performed by the O-acetyltransferase PC-16 and the P.simplicissimum ptmI-ortholog not yet identified in P.crustosum, leads to the production of the prenylated form of penijanthine. The FAD-linked oxidoreductase ptmO then converts the prenylated form of penijanthine into PC-M5 which is in turn transformed into PC-M4 by the aromatic dimethylallyltransferase PC-22. A series of oxidation steps involving 4 cytochrome P450 monooxygenases (PC-21, PC-05, PC-23, PC-20) and a FAD-dependent monooxygenase (PC-14) are required for the transformation of PC-M4 to penitrems A and E. Synthesis of these final products is proposed to proceed via penitrems D and C (PC-21, PC-05, PC-14) and penitrems B and F (PC-21, PC-05, PC-14, PC-23). The sequence is that of Monooxygenase PC-14 from Penicillium crustosum (Blue mold fungus).